We begin with the raw amino-acid sequence, 963 residues long: Ubiquitin carboxyl-terminal hydrolase 4 (963 aa).

A DUSP domain is found at 11–122; it reads PDAETQKSEL…GQQPIVRKVV (112 aa). The tract at residues 27-216 is necessary for interaction with SART3; it reads TLQRGAQWYL…LYQGQVLVIE (190 aa). A Nuclear export signal motif is present at residues 133–141; that stretch reads VEVYLLELK. One can recognise a Ubiquitin-like 1 domain in the interval 142 to 226; the sequence is LCENSDPTNV…PQNEDGTWPR (85 aa). The tract at residues 219–277 is disordered; the sequence is NEDGTWPRQTQQSKSSTAPSRNFTTSPKSSASPYSSVSASPIANGDSTNTSGMHSSGVS. A compositionally biased stretch (polar residues) spans 225–243; the sequence is PRQTQQSKSSTAPSRNFTT. The interval 229–295 is required for USP4 activation by providing conformational flexibility between the DUSP and catalytic domains; it reads QQSKSSTAPS…SYNCQESPLT (67 aa). Residues 244–261 show a composition bias toward low complexity; it reads SPKSSASPYSSVSASPIA. A USP domain is found at 302–923; it reads CGLGNLGNTC…AAYVLFYQRR (622 aa). Cysteine 311 acts as the Nucleophile in catalysis. A regulates ubiquitin dissociation region spans residues 384-386; sequence PQF. Residues 405-407 are necessary for interaction with RBL2; that stretch reads LHE. Serine 445 carries the post-translational modification Phosphoserine. The necessary for interaction with RB1 and RBL2 stretch occupies residues 459–463; it reads LVCPE. Zn(2+) contacts are provided by cysteine 461 and cysteine 464. Residues 483 to 571 form the Ubiquitin-like 2 domain; the sequence is LKKDRVMEIF…IFVYEVCSTS (89 aa). Positions 485–775 are interacts with DUSP and ubiquitin-like 1 domains and is required for USP4 activation; it reads KDRVMEIFLV…LQPQKKKKTA (291 aa). Residues 634-701 form a disordered region; it reads PLPDESGSSP…ATQKKNKGRP (68 aa). Residues serine 675 and serine 680 each carry the phosphoserine modification. The short motif at 767 to 772 is the Nuclear localization signal element; it reads QPQKKK. 2 residues coordinate Zn(2+): cysteine 799 and cysteine 802. Residue histidine 881 is the Proton acceptor of the active site. A disordered region spans residues 930–963; the sequence is TPSLSFPGSSDGGARPSSSQQGTGDDETYSMDTN. Residues 953 to 963 show a composition bias toward acidic residues; it reads GDDETYSMDTN.

This sequence belongs to the peptidase C19 family. USP4 subfamily. In terms of assembly, interacts with RB1 (both dephosphorylated and hypophosphorylated forms). Interacts with RBL1 and RBL2. Interacts with ADORA2A (via cytoplasmic C-terminus); the interaction is direct. Interacts with SART3; recruits USP4 to its substrate PRPF3. In terms of processing, phosphorylated at Ser-445 by PKB/AKT1 in response to EGF stimulus, promoting its ability deubiquitinate RHEB. Post-translationally, monoubiquitinated by TRIM21. Ubiquitination does not lead to its proteasomal degradation. Autodeubiquitinated.

Its subcellular location is the cytoplasm. The protein resides in the nucleus. The catalysed reaction is Thiol-dependent hydrolysis of ester, thioester, amide, peptide and isopeptide bonds formed by the C-terminal Gly of ubiquitin (a 76-residue protein attached to proteins as an intracellular targeting signal).. The completion of the deubiquitinase reaction is mediated by the DUSP and ubiquitin-like 1 domains which promotes the release of ubiquitin from the catalytic site enabling subsequent reactions to occur. Deubiquitinating enzyme that removes conjugated ubiquitin from target proteins. Deubiquitinates PDPK1. Deubiquitinates TRIM21. Deubiquitinates receptor ADORA2A which increases the amount of functional receptor at the cell surface. Deubiquitinates HAS2. Deubiquitinates RHEB in response to EGF signaling, promoting mTORC1 signaling. May regulate mRNA splicing through deubiquitination of the U4 spliceosomal protein PRPF3. This may prevent its recognition by the U5 component PRPF8 thereby destabilizing interactions within the U4/U6.U5 snRNP. May also play a role in the regulation of quality control in the ER. This chain is Ubiquitin carboxyl-terminal hydrolase 4 (USP4), found in Bos taurus (Bovine).